Reading from the N-terminus, the 57-residue chain is UPF0434 protein Spea_1772 (57 aa).

Belongs to the UPF0434 family.

This is UPF0434 protein Spea_1772 from Shewanella pealeana (strain ATCC 700345 / ANG-SQ1).